Here is a 380-residue protein sequence, read N- to C-terminus: Selenoprotein P (380 aa).

The N-terminal stretch at 1–19 (MWRSLGLALALCLLPYGGA) is a signal peptide. Selenocysteine 59 is a non-standard amino acid (selenocysteine). 3 N-linked (GlcNAc...) asparagine glycosylation sites follow: asparagine 83, asparagine 176, and asparagine 195. The tract at residues 196–257 (KTAEPSEAHS…RGQHRQGHLE (62 aa)) is disordered. The segment covering 221–237 (SKPSENQQPGPSETTLP) has biased composition (polar residues). A compositionally biased stretch (basic residues) spans 241–253 (LHHHHRHRGQHRQ). Residue selenocysteine 259 is a non-standard amino acid, selenocysteine. Serine 264 is modified (phosphoserine). 4 non-standard amino acids (selenocysteine) are found at residues selenocysteine 277, selenocysteine 318, selenocysteine 330, and selenocysteine 352. Positions 346–380 (RSPPAAUQNQPMNPMEANPNUSUDNQTRKUKUHSN) are disordered. Positions 348 to 360 (PPAAUQNQPMNPM) are enriched in low complexity. The N-linked (GlcNAc...) asparagine glycan is linked to asparagine 365. Residues selenocysteine 366 and selenocysteine 368 are each a non-standard amino acid (selenocysteine). A glycan (N-linked (GlcNAc...) asparagine) is linked at asparagine 370. Residues selenocysteine 375 and selenocysteine 377 are each a non-standard amino acid (selenocysteine).

This sequence belongs to the selenoprotein P family. Phosphorylation sites are present in the extracellular medium. In terms of tissue distribution, in the kidney, expressed in the cortex with no expression observed in the medulla (at protein level). Expressed by the liver and secreted in plasma.

The protein localises to the secreted. Functionally, might be responsible for some of the extracellular antioxidant defense properties of selenium or might be involved in the transport of selenium. May supply selenium to tissues such as brain and testis. This Mus musculus (Mouse) protein is Selenoprotein P.